The chain runs to 278 residues: Rhomboid protease GlpG (278 aa).

The next 6 helical transmembrane spans lie at 94–114 (AGPLTLSVMVLCIAIYILMLI), 143–163 (AFLHFSLLHILFNLMWWWYLG), 175–195 (LLVLTIVSAVFSGWGQSLFSG), 196–216 (ANFGGLSGVVYALMGYVWLTG), 224–241 (ISLPRGLMAFSVLWLIAG), and 245–267 (ILGLSIANAAHVSGLIIGLLMAF). Serine 202 functions as the Nucleophile in the catalytic mechanism. Histidine 255 is an active-site residue.

The protein belongs to the peptidase S54 family.

The protein localises to the cell inner membrane. The catalysed reaction is Cleaves type-1 transmembrane domains using a catalytic dyad composed of serine and histidine that are contributed by different transmembrane domains.. Its function is as follows. Rhomboid-type serine protease that catalyzes intramembrane proteolysis. The sequence is that of Rhomboid protease GlpG from Yersinia pseudotuberculosis serotype I (strain IP32953).